The primary structure comprises 320 residues: MQTRNAFSWLKKQITRSISVSLMIYILTRTSISSAYPIFAQQGYENPREATGRIVCANCHLANKPVEIEVPQAVLPDTVFEAVVRIPYDMQLKQVLANGKRGGLNVGAVLILPEGFELAPPDRISPEMKEKIGNLSFQSYRPNKKNILVIGPVPGQKYSEITFPILSPDPATKKDVRFLKYPIYVGGNRGRGQIYPDGSKSNNTVYNATAAGIVSKIIRKEKGGYEITIADASDGRQVVDIIPPGPELLVSEGESIKFDQPLTSNPNVGGFGQGDAEIVFQDPLRAQGLLFFLASVILAQIFLVLKKKQFEKVQLAEMNF.

The signal sequence occupies residues 1 to 35; the sequence is MQTRNAFSWLKKQITRSISVSLMIYILTRTSISSA. Heme contacts are provided by Tyr-36, Cys-56, Cys-59, and His-60. A helical membrane pass occupies residues 286–306; the sequence is AQGLLFFLASVILAQIFLVLK.

It belongs to the cytochrome f family. As to quaternary structure, the 4 large subunits of the cytochrome b6-f complex are cytochrome b6, subunit IV (17 kDa polypeptide, petD), cytochrome f and the Rieske protein, while the 4 small subunits are PetG, PetL, PetM and PetN. The complex functions as a dimer. Heme serves as cofactor.

The protein resides in the plastid. The protein localises to the chloroplast thylakoid membrane. Its function is as follows. Component of the cytochrome b6-f complex, which mediates electron transfer between photosystem II (PSII) and photosystem I (PSI), cyclic electron flow around PSI, and state transitions. The polypeptide is Cytochrome f (Nicotiana tomentosiformis (Tobacco)).